The following is a 76-amino-acid chain: Conotoxin Am6.3 (76 aa).

Residues 1-22 (MKLTCMMIIAVLFLTAWTFATA) form the signal peptide. Intrachain disulfides connect C52/C67, C59/C71, and C66/C75.

The protein belongs to the conotoxin O1 superfamily. Is not hydroxylated. In terms of tissue distribution, expressed by the venom duct.

It is found in the secreted. Functionally, probable toxin that inhibits ion channels. The sequence is that of Conotoxin Am6.3 from Conus amadis (Amadis cone).